A 119-amino-acid chain; its full sequence is Large ribosomal subunit protein P3 (119 aa).

The tract at residues 81–119 is disordered; that stretch reads GAAAGAASGGAAAEAPKAEEKKEEEKEESEDDLGFSLFD. The span at 84–95 shows a compositional bias: low complexity; that stretch reads AGAASGGAAAEA.

It belongs to the eukaryotic ribosomal protein P1/P2 family. Post-translationally, phosphorylated.

Its function is as follows. Plays an important role in the elongation step of protein synthesis. This is Large ribosomal subunit protein P3 from Oryza sativa subsp. japonica (Rice).